The primary structure comprises 164 residues: ATP synthase subunit b (164 aa).

The chain crosses the membrane as a helical span at residues 6-26 (GELVGNFILVTGSVIVLLLLI).

The protein belongs to the ATPase B chain family. As to quaternary structure, F-type ATPases have 2 components, F(1) - the catalytic core - and F(0) - the membrane proton channel. F(1) has five subunits: alpha(3), beta(3), gamma(1), delta(1), epsilon(1). F(0) has three main subunits: a(1), b(2) and c(10-14). The alpha and beta chains form an alternating ring which encloses part of the gamma chain. F(1) is attached to F(0) by a central stalk formed by the gamma and epsilon chains, while a peripheral stalk is formed by the delta and b chains.

The protein resides in the cell membrane. F(1)F(0) ATP synthase produces ATP from ADP in the presence of a proton or sodium gradient. F-type ATPases consist of two structural domains, F(1) containing the extramembraneous catalytic core and F(0) containing the membrane proton channel, linked together by a central stalk and a peripheral stalk. During catalysis, ATP synthesis in the catalytic domain of F(1) is coupled via a rotary mechanism of the central stalk subunits to proton translocation. In terms of biological role, component of the F(0) channel, it forms part of the peripheral stalk, linking F(1) to F(0). This Streptococcus pyogenes serotype M1 protein is ATP synthase subunit b.